The chain runs to 355 residues: Galectin-9 (355 aa).

Galectin domains are found at residues 17–148 and 227–355; these read FTGM…ISFQ and FFTS…HVQT. A beta-D-galactoside contacts are provided by residues Asn48, His61, Arg65, Asn75, 82–88, His267, Arg271, Thr281, and 287–293; these read WGTEERK and WGSEERS.

The protein resides in the cytoplasm. It is found in the nucleus. It localises to the secreted. Its function is as follows. Binds galactosides. Has high affinity for the Forssman pentasaccharide. Ligand for HAVCR2/TIM3. Binding to HAVCR2 induces T-helper type 1 lymphocyte (Th1) death. Also stimulates bactericidal activity in infected macrophages by causing macrophage activation and IL1B secretion which restricts intracellular bacterial growth. Ligand for P4HB; the interaction retains P4HB at the cell surface of Th2 T helper cells, increasing disulfide reductase activity at the plasma membrane, altering the plasma membrane redox state and enhancing cell migration. Ligand for CD44; the interaction enhances binding of SMAD3 to the FOXP3 promoter, leading to up-regulation of FOXP3 expression and increased induced regulatory T (iTreg) cell stability and suppressive function. Promotes ability of mesenchymal stromal cells to suppress T-cell proliferation. Expands regulatory T-cells and induces cytotoxic T-cell apoptosis following virus infection. Activates ERK1/2 phosphorylation inducing cytokine (IL-6, IL-8, IL-12) and chemokine (CCL2) production in mast and dendritic cells. Inhibits degranulation and induces apoptosis of mast cells. Induces maturation and migration of dendritic cells. Inhibits natural killer (NK) cell function. Can transform NK cell phenotype from peripheral to decidual during pregnancy. Astrocyte derived galectin-9 enhances microglial TNF production. May play a role in thymocyte-epithelial interactions relevant to the biology of the thymus. May provide the molecular basis for urate flux across cell membranes, allowing urate that is formed during purine metabolism to efflux from cells and serving as an electrogenic transporter that plays an important role in renal and gastrointestinal urate excretion. Highly selective to the anion urate. The sequence is that of Galectin-9 (LGALS9) from Bos taurus (Bovine).